The sequence spans 148 residues: Lysozyme C (148 aa).

An N-terminal signal peptide occupies residues 1–18 (MKAPLLLGLLLLSVTVQG). Residues 19–148 (KVFERCDLAR…VSQYVRNCGV (130 aa)) form the C-type lysozyme domain. 4 cysteine pairs are disulfide-bonded: cysteine 24–cysteine 146, cysteine 48–cysteine 134, cysteine 83–cysteine 99, and cysteine 95–cysteine 113. Active-site residues include glutamate 53 and aspartate 71.

It belongs to the glycosyl hydrolase 22 family. In terms of assembly, monomer.

Its subcellular location is the secreted. It carries out the reaction Hydrolysis of (1-&gt;4)-beta-linkages between N-acetylmuramic acid and N-acetyl-D-glucosamine residues in a peptidoglycan and between N-acetyl-D-glucosamine residues in chitodextrins.. In terms of biological role, lysozymes have primarily a bacteriolytic function; those in tissues and body fluids are associated with the monocyte-macrophage system and enhance the activity of immunoagents. This chain is Lysozyme C (LYZ), found in Leptonychotes weddellii (Weddell seal).